Reading from the N-terminus, the 338-residue chain is L-serine dehydratase (338 aa).

Lys39 carries the post-translational modification N6-(pyridoxal phosphate)lysine.

The protein belongs to the serine/threonine dehydratase family. Pyridoxal 5'-phosphate serves as cofactor.

It is found in the cytoplasm. It catalyses the reaction L-serine = pyruvate + NH4(+). Its pathway is carbohydrate biosynthesis; gluconeogenesis. The sequence is that of L-serine dehydratase (SDL1) from Saccharomyces cerevisiae (strain YJM789) (Baker's yeast).